Here is a 72-residue protein sequence, read N- to C-terminus: Translation initiation factor IF-1 (72 aa).

The S1-like domain maps to alanine 2 to lysine 72.

Belongs to the IF-1 family. In terms of assembly, component of the 30S ribosomal translation pre-initiation complex which assembles on the 30S ribosome in the order IF-2 and IF-3, IF-1 and N-formylmethionyl-tRNA(fMet); mRNA recruitment can occur at any time during PIC assembly.

It localises to the cytoplasm. Its function is as follows. One of the essential components for the initiation of protein synthesis. Stabilizes the binding of IF-2 and IF-3 on the 30S subunit to which N-formylmethionyl-tRNA(fMet) subsequently binds. Helps modulate mRNA selection, yielding the 30S pre-initiation complex (PIC). Upon addition of the 50S ribosomal subunit IF-1, IF-2 and IF-3 are released leaving the mature 70S translation initiation complex. The sequence is that of Translation initiation factor IF-1 from Lactiplantibacillus plantarum (strain ATCC BAA-793 / NCIMB 8826 / WCFS1) (Lactobacillus plantarum).